Reading from the N-terminus, the 244-residue chain is MSSDSVVAGNISRADVERVVRAVLTRQLAGATTSSGSVSSAGGPPNPLVVNISARHVHLTEEHVEVLFGKGVKLEPMKWLYQDGYYAAKQTVTIFGPRRRMIPDVRVLGPCRNASQVELAFTDGISLGIDLPVRISGDHHDTVGCVLVGPAGVVELKSGVIRAMRHVHMSPADCAYYGVKNGDEMDLKIHSGPCTTTLEHVTVREDKDVKLEVHIDTDEGNAVDLSHATKVELVKPVGCGCHSK.

CoA is bound at residue 52-54 (ISA). Zn(2+) contacts are provided by H56 and H58. CoA is bound at residue R106. A phosphate-binding site is contributed by R112. Residues E118, H166, H168, and H214 each coordinate Zn(2+). N221 contributes to the CoA binding site.

The protein belongs to the PduL family. As to quaternary structure, full-length protein forms large oligomers. Possible homotrimer and monomer, when purified in the absence of the encapsulation peptide (EP, residues 1-20). The EP may influence oligomerization. Requires Zn(2+) as cofactor.

It is found in the bacterial microcompartment. It catalyses the reaction propanoyl-CoA + phosphate = propanoyl phosphate + CoA. Its function is as follows. Part of a bacterial microcompartment (BMC) locus required for growth on plant and algal sugars, including L-fucose and L-rhamnose. Thought to be active on lactyl-CoA in a lactaldehyde-degradation pathway. CoA is regenerated within the BMC via this enzyme, although there must also be cofactor transport across the BMC. Directly targeted to the BMC. The polypeptide is Phosphate propanoyltransferase (Planctopirus limnophila (strain ATCC 43296 / DSM 3776 / IFAM 1008 / Mu 290) (Planctomyces limnophilus)).